Reading from the N-terminus, the 554-residue chain is MLO-like protein 14 (554 aa).

The Extracellular segment spans residues 1 to 13 (MREETEPSERTLG). A helical membrane pass occupies residues 14–34 (LTPTWSVATVLTIFVFVSLIV). The Cytoplasmic portion of the chain corresponds to 35–63 (ERSIHRLSNWLQKTKRKPLFAALEKMKEE). A helical membrane pass occupies residues 64–84 (LMLLGFISLLLTATSSTIANI). At 85–158 (CVSSSFHNDR…SYEGMEQLHR (74 aa)) the chain is on the extracellular side. Residues 159–179 (FIFIMAVTHVTYSCLTMLLAI) form a helical membrane-spanning segment. The Cytoplasmic segment spans residues 180-281 (VKIHRWRIWE…MIRSMEEEFQ (102 aa)). A helical membrane pass occupies residues 282 to 302 (KIVGVSGPLWGFVVGFMLFNI). Position 303 (K303) is a topological domain, extracellular. A helical transmembrane segment spans residues 304-324 (GSNLYFWLAIIPITLVLLVGA). Topologically, residues 325–366 (KLQHVIATLALENASITEYASGIKLRPRDELFWFKKPELLLS) are cytoplasmic. The chain crosses the membrane as a helical span at residues 367–387 (LIHFIQFQNAFELASFFWFWW). The Extracellular portion of the chain corresponds to 388-406 (QFGYNSCFLRNHLLVYLRL). The helical transmembrane segment at 407–427 (ILGFSGQFLCSYSTLPLYALV) threads the bilayer. Over 428–554 (TQMGTNYKAA…SSSLPMRREC (127 aa)) the chain is Cytoplasmic. Residues 441–462 (QRVRETINGWGKATRRKRRHGL) are calmodulin-binding.

Belongs to the MLO family.

It localises to the membrane. May be involved in modulation of pathogen defense and leaf cell death. Activity seems to be regulated by Ca(2+)-dependent calmodulin binding and seems not to require heterotrimeric G proteins. This Arabidopsis thaliana (Mouse-ear cress) protein is MLO-like protein 14 (MLO14).